The following is a 102-amino-acid chain: Spexin prohormone 1 (102 aa).

The signal sequence occupies residues 1–26; the sequence is MKDLRTLAAYALALLLLATFVSHSWS. A propeptide spanning residues 27–35 is cleaved from the precursor; the sequence is APKGSFQRR. The residue at position 49 (glutamine 49) is a Glutamine amide. The propeptide occupies 50–102; that stretch reads GRRFVSEDRNEGDLYDTIRLESRSQNTENLSISKAAAFLLNILQQARDEDEPY.

Belongs to the spexin family. In terms of tissue distribution, mainly expressed in the brain and ovary. Detected bilaterally in the adult brainstem. Expressed in neurons in the dorsal habenula (dHb). In the dHb some neurons project into the interpeduncular nucleus (IPN) where expression often overlaps with galr2a and galr2b. Weakly expressed in the liver, intestine, kidney, heart and gill.

It localises to the secreted. The protein resides in the extracellular space. It is found in the cytoplasmic vesicle. Its subcellular location is the secretory vesicle. In terms of biological role, plays a role in the regulation of food intake and energy metabolism. May also be involved in suppressing the anxiety response by promoting the expression of serotonin-related genes such as fev, tph2 and slc6a4a. Its function is as follows. Acts as a ligand for galanin receptors galr2a and galr2b. Brain administration of the peptide inhibits food consumption and elevates levels of glucose, triacylglycerol and cholesterol in the serum. Likely to control food intake by regulating appetite related genes which includes the negative regulation of the orexigenic factor agrp. By controlling food intake it may act as a satiety factor in energy metabolism. This is Spexin prohormone 1 (spx) from Danio rerio (Zebrafish).